The following is a 490-amino-acid chain: MDPILVLVFTLSCLFLLSLWRQSSERGKLPPGPTPLPIIGNILQINVKDICQSFTNLSKVYGPVYTLYLGRKPTVVLHGYEAVKEALVDHGEEFAGRGRLPVFDKATNGMGIIFSKGNVWKNTRRFSLTTLRNLGMGKRSIEDRVQEEARCLVEELRKTNGSPCDPTFILGCAPCNVICSIIFQDRFDYKDRDFLNLMEKLNEITKIMSTPWLQVCNTFPVLLDYCPGSHNKVFKNYACIKNFLLEKIKEHEESLDVTIPRDFIDYFLINGGQENGNYPLKNRLEHLAITVTDLFSAGTETTSTTLRYALLLLLKYPHVTAKVQEEIEHVIGKHRRPCMQDRSHMPYTDAMIHEVQRFIDLVPNSLPHEVTCDIKFRNYFIPKGTNVITSLSSVLRDSKEFPNPEKFDPGHFLDENGKFKKSDYFMPFSTGKRICAGEGLARMELFLFLTSILQNFNLKPLVHPKDIDVTPMLIGLASVPPAFQLCFIPS.

Position 127 is a phosphoserine (Ser127). An N6-acetyllysine mark is found at Lys249 and Lys375. Cys435 lines the heme pocket.

This sequence belongs to the cytochrome P450 family. Heme serves as cofactor. Expressed in heart and liver.

It is found in the endoplasmic reticulum membrane. The protein resides in the microsome membrane. It carries out the reaction an organic molecule + reduced [NADPH--hemoprotein reductase] + O2 = an alcohol + oxidized [NADPH--hemoprotein reductase] + H2O + H(+). Metabolizes arachidonic acid to several midchain and omega-terminal hydroxyeicosatetraenoic acids (HETE). This is Cytochrome P450 2C50 from Mus musculus (Mouse).